The following is a 319-amino-acid chain: Acetyl-coenzyme A carboxylase carboxyl transferase subunit alpha (319 aa).

The 262-residue stretch at 35-296 (NIDEEVHRLR…KAQLLADLAD (262 aa)) folds into the CoA carboxyltransferase C-terminal domain.

It belongs to the AccA family. Acetyl-CoA carboxylase is a heterohexamer composed of biotin carboxyl carrier protein (AccB), biotin carboxylase (AccC) and two subunits each of ACCase subunit alpha (AccA) and ACCase subunit beta (AccD).

It is found in the cytoplasm. The enzyme catalyses N(6)-carboxybiotinyl-L-lysyl-[protein] + acetyl-CoA = N(6)-biotinyl-L-lysyl-[protein] + malonyl-CoA. Its pathway is lipid metabolism; malonyl-CoA biosynthesis; malonyl-CoA from acetyl-CoA: step 1/1. Functionally, component of the acetyl coenzyme A carboxylase (ACC) complex. First, biotin carboxylase catalyzes the carboxylation of biotin on its carrier protein (BCCP) and then the CO(2) group is transferred by the carboxyltransferase to acetyl-CoA to form malonyl-CoA. The sequence is that of Acetyl-coenzyme A carboxylase carboxyl transferase subunit alpha from Shigella boydii serotype 4 (strain Sb227).